The primary structure comprises 525 residues: Ribosomal protein S6 kinase beta-1 (525 aa).

The disordered stretch occupies residues 1-54 (MRRRRRRDGFYPAPDFRDREAEDMAGVFDIDLDQPEDAGSEDELEEGGQLNESM). Positions 28 to 32 (FDIDL) match the TOS motif motif. Positions 30–46 (IDLDQPEDAGSEDELEE) are enriched in acidic residues. Residues 91 to 352 (FELLRVLGKG…AGEVQAHPFF (262 aa)) form the Protein kinase domain. ATP-binding positions include 97 to 105 (LGKGGYGKV) and Lys123. Asp218 functions as the Proton acceptor in the catalytic mechanism. A Phosphothreonine; by PDPK1 modification is found at Thr252. In terms of domain architecture, AGC-kinase C-terminal spans 353 to 423 (RHINWEELLA…VAPSVLESVK (71 aa)). The disordered stretch occupies residues 380–399 (SQFDSKFTRQTPVDSPDDST). Residues 381 to 399 (QFDSKFTRQTPVDSPDDST) are compositionally biased toward polar residues. Position 394 is a phosphoserine (Ser394). The residue at position 412 (Thr412) is a Phosphothreonine; by MTOR, NEK6 and NEK7. Residues 424–525 (EKFSFEPKIR…KRPEHLRMNL (102 aa)) form an autoinhibitory domain region. Ser434 and Ser441 each carry phosphoserine. Residue Thr444 is modified to Phosphothreonine. 2 positions are modified to phosphoserine: Ser447 and Ser452. The disordered stretch occupies residues 486–509 (VTTSGEASAPLPIRQPNSGPYKKQ). Lys516 carries the N6-acetyllysine modification.

This sequence belongs to the protein kinase superfamily. AGC Ser/Thr protein kinase family. S6 kinase subfamily. As to quaternary structure, interacts with PPP1R9A/neurabin-1. Interacts with RPTOR. Interacts with IRS1. Interacts with EIF3B and EIF3C. Interacts with TRAF4. Interacts with POLDIP3. Interacts (via N-terminus) with IER5. Phosphorylation at Thr-412 is regulated by mTORC1. The phosphorylation at this site is maintained by an agonist-dependent autophosphorylation mechanism. Activated by phosphorylation at Thr-252 by PDPK1. Dephosphorylation by PPP1CC at Thr-412 in mitochondrion.

The protein localises to the cytoplasm. The protein resides in the synapse. Its subcellular location is the synaptosome. It localises to the mitochondrion outer membrane. It is found in the mitochondrion. The catalysed reaction is L-seryl-[protein] + ATP = O-phospho-L-seryl-[protein] + ADP + H(+). The enzyme catalyses L-threonyl-[protein] + ATP = O-phospho-L-threonyl-[protein] + ADP + H(+). Its activity is regulated as follows. Activation requires multiple phosphorylation events on serine/threonine residues. Activation appears to be first mediated by phosphorylation of multiple sites in the autoinhibitory domain, which facilitates phosphorylation at Thr-412, disrupting the autoinhibitory mechanism and allowing phosphorylation of Thr-252 by PDPK1. The active conformation of the kinase is believed to be stabilized by a mechanism involving three conserved phosphorylation sites located in the kinase domain activation loop (Thr-252) and in the AGC-kinase C-terminal domain (Ser-394 in the middle of the tail/linker region and Thr-412 within a hydrophobic motif at its end). Activated by mTORC1; isoform Alpha I and isoform Alpha II are sensitive to rapamycin, which inhibits activating phosphorylation at Thr-412. Activated by PDPK1. Functionally, serine/threonine-protein kinase that acts downstream of mTOR signaling in response to growth factors and nutrients to promote cell proliferation, cell growth and cell cycle progression. Regulates protein synthesis through phosphorylation of EIF4B, RPS6 and EEF2K, and contributes to cell survival by repressing the pro-apoptotic function of BAD. Under conditions of nutrient depletion, the inactive form associates with the EIF3 translation initiation complex. Upon mitogenic stimulation, phosphorylation by the mechanistic target of rapamycin complex 1 (mTORC1) leads to dissociation from the EIF3 complex and activation. The active form then phosphorylates and activates several substrates in the pre-initiation complex, including the EIF2B complex and the cap-binding complex component EIF4B. Also controls translation initiation by phosphorylating a negative regulator of EIF4A, PDCD4, targeting it for ubiquitination and subsequent proteolysis. Promotes initiation of the pioneer round of protein synthesis by phosphorylating POLDIP3/SKAR. In response to IGF1, activates translation elongation by phosphorylating EEF2 kinase (EEF2K), which leads to its inhibition and thus activation of EEF2. Also plays a role in feedback regulation of mTORC2 by mTORC1 by phosphorylating MAPKAP1/SIN1, MTOR and RICTOR, resulting in the inhibition of mTORC2 and AKT1 signaling. Also involved in feedback regulation of mTORC1 and mTORC2 by phosphorylating DEPTOR. Mediates cell survival by phosphorylating the pro-apoptotic protein BAD and suppressing its pro-apoptotic function. Phosphorylates mitochondrial URI1 leading to dissociation of a URI1-PPP1CC complex. The free mitochondrial PPP1CC can then dephosphorylate RPS6KB1 at Thr-412, which is proposed to be a negative feedback mechanism for the RPS6KB1 anti-apoptotic function. Mediates TNF-alpha-induced insulin resistance by phosphorylating IRS1 at multiple serine residues, resulting in accelerated degradation of IRS1. In cells lacking functional TSC1-2 complex, constitutively phosphorylates and inhibits GSK3B. May be involved in cytoskeletal rearrangement through binding to neurabin. Phosphorylates and activates the pyrimidine biosynthesis enzyme CAD, downstream of MTOR. Following activation by mTORC1, phosphorylates EPRS and thereby plays a key role in fatty acid uptake by adipocytes and also most probably in interferon-gamma-induced translation inhibition. In Oryctolagus cuniculus (Rabbit), this protein is Ribosomal protein S6 kinase beta-1 (RPS6KB1).